Reading from the N-terminus, the 189-residue chain is Phosphoheptose isomerase (189 aa).

Residues 34-189 form the SIS domain; that stretch reads LVAALKGGKK…CDLVEKGLFK (156 aa). Residue 49–51 participates in substrate binding; it reads NGG. Zn(2+)-binding residues include histidine 58 and glutamate 62. Residues glutamate 62, 91–92, 117–119, serine 122, and glutamine 169 each bind substrate; these read ND and STS. Zn(2+) contacts are provided by glutamine 169 and histidine 177.

Belongs to the SIS family. GmhA subfamily. Homotetramer. Zn(2+) serves as cofactor.

The protein resides in the cytoplasm. It carries out the reaction 2 D-sedoheptulose 7-phosphate = D-glycero-alpha-D-manno-heptose 7-phosphate + D-glycero-beta-D-manno-heptose 7-phosphate. It functions in the pathway carbohydrate biosynthesis; D-glycero-D-manno-heptose 7-phosphate biosynthesis; D-glycero-alpha-D-manno-heptose 7-phosphate and D-glycero-beta-D-manno-heptose 7-phosphate from sedoheptulose 7-phosphate: step 1/1. In terms of biological role, catalyzes the isomerization of sedoheptulose 7-phosphate in D-glycero-D-manno-heptose 7-phosphate. This chain is Phosphoheptose isomerase, found in Geobacter metallireducens (strain ATCC 53774 / DSM 7210 / GS-15).